A 156-amino-acid polypeptide reads, in one-letter code: Phosphopantetheine adenylyltransferase (156 aa).

A substrate-binding site is contributed by threonine 9. ATP is bound by residues threonine 9–phenylalanine 10 and histidine 17. Substrate contacts are provided by lysine 41, leucine 73, and arginine 87. Residues glycine 88–arginine 90, glutamate 98, and tryptophan 123–threonine 129 each bind ATP.

The protein belongs to the bacterial CoaD family. In terms of assembly, homohexamer. Mg(2+) serves as cofactor.

Its subcellular location is the cytoplasm. The catalysed reaction is (R)-4'-phosphopantetheine + ATP + H(+) = 3'-dephospho-CoA + diphosphate. The protein operates within cofactor biosynthesis; coenzyme A biosynthesis; CoA from (R)-pantothenate: step 4/5. Functionally, reversibly transfers an adenylyl group from ATP to 4'-phosphopantetheine, yielding dephospho-CoA (dPCoA) and pyrophosphate. The protein is Phosphopantetheine adenylyltransferase of Haemophilus influenzae (strain 86-028NP).